Reading from the N-terminus, the 213-residue chain is BREX protein BrxA (213 aa).

Belongs to the BrxA family.

Its function is as follows. BREX systems (bacteriophage exclusion) provide immunity against bacteriophage. A probably non-essential part of a type 1 BREX system which protects against dsDNA phage. This system allows phage adsorption but prevents phage DNA replication, without degradation of the phage DNA. Methylation of bacterial DNA by PglX guides self/non-self discrimination. When the brxA-brxB-brxC-pglX-pglZ-brxL genes are transformed into a susceptible E.coli strain (BW25113) they confer very high resistance to infection by bacteriophage VR7 and VpaE1, about 100-fold protection against lambda, T5 and T7 and no protection against RNA phage Qbeta, ssDNA phage M13 or dSDNA phage T4 and VR5. Glycosylated phage DNA is not susceptible to BREX. The BREX system does not confer resistance to lysogenic lambda phage, i.e. prophage that are integrated into the chromosomal DNA and then induced to form phage. The protein is BREX protein BrxA of Escherichia coli O9:H4 (strain HS).